The following is a 732-amino-acid chain: uncharacterized protein (732 aa).

In terms of domain architecture, TR mART core spans 163–390 (YYTINELNYL…FGIVAKKKYE (228 aa)). Residues Arg285, Ser309, and Glu354 contribute to the active site.

This is an uncharacterized protein from Acanthamoeba polyphaga mimivirus (APMV).